Reading from the N-terminus, the 284-residue chain is Nucleotide-binding protein PP_0949 (284 aa).

8–15 (GRSGSGKS) contributes to the ATP binding site. 60 to 63 (DARN) contributes to the GTP binding site.

It belongs to the RapZ-like family.

Functionally, displays ATPase and GTPase activities. This chain is Nucleotide-binding protein PP_0949, found in Pseudomonas putida (strain ATCC 47054 / DSM 6125 / CFBP 8728 / NCIMB 11950 / KT2440).